The sequence spans 302 residues: Glycine--tRNA ligase alpha subunit (302 aa).

This sequence belongs to the class-II aminoacyl-tRNA synthetase family. In terms of assembly, tetramer of two alpha and two beta subunits.

Its subcellular location is the cytoplasm. It carries out the reaction tRNA(Gly) + glycine + ATP = glycyl-tRNA(Gly) + AMP + diphosphate. In Psychromonas ingrahamii (strain DSM 17664 / CCUG 51855 / 37), this protein is Glycine--tRNA ligase alpha subunit.